Reading from the N-terminus, the 114-residue chain is Seed trypsin/chymotrypsin inhibitor TI5-72 (114 aa).

Positions 1–28 are cleaved as a signal peptide; the sequence is MELMNKKVMMKLALMVFLLSFAANVVNA. Residues 29–42 constitute a propeptide that is removed on maturation; that stretch reads RFDSTSFITQVLSN. 7 cysteine pairs are disulfide-bonded: cysteine 50–cysteine 103, cysteine 51–cysteine 66, cysteine 54–cysteine 99, cysteine 56–cysteine 64, cysteine 73–cysteine 80, cysteine 77–cysteine 92, and cysteine 82–cysteine 90.

Belongs to the Bowman-Birk serine protease inhibitor family. As to expression, seed.

Inhibitor of trypsin and of chymotrypsin. May function as a natural phytochemical defense against predators. This is Seed trypsin/chymotrypsin inhibitor TI5-72 (TI572) from Pisum sativum (Garden pea).